The sequence spans 158 residues: Transcription elongation factor GreA (158 aa).

Residues 2-70 (ENQKQYPMTQ…IEQDIQRIEH (69 aa)) are a coiled coil.

Belongs to the GreA/GreB family.

Functionally, necessary for efficient RNA polymerase transcription elongation past template-encoded arresting sites. The arresting sites in DNA have the property of trapping a certain fraction of elongating RNA polymerases that pass through, resulting in locked ternary complexes. Cleavage of the nascent transcript by cleavage factors such as GreA or GreB allows the resumption of elongation from the new 3'terminus. GreA releases sequences of 2 to 3 nucleotides. The protein is Transcription elongation factor GreA of Staphylococcus epidermidis (strain ATCC 35984 / DSM 28319 / BCRC 17069 / CCUG 31568 / BM 3577 / RP62A).